Reading from the N-terminus, the 542-residue chain is Probable cysteine proteinase 361L (542 aa).

Residues Cys-172, His-382, and Asn-414 contribute to the active site. Residues 520 to 540 (TNNWYIYALIIIFILIIFFVL) traverse the membrane as a helical segment.

Belongs to the peptidase C1 family.

The protein localises to the membrane. Functionally, probable cysteine protease. The chain is Probable cysteine proteinase 361L from Acheta domesticus (House cricket).